The chain runs to 423 residues: RNA polymerase sigma factor SigA (423 aa).

The disordered stretch occupies residues 1–76; it reads MKKSKRKNAQ…EEDLPIPKIS (76 aa). Residues 21–70 show a composition bias toward acidic residues; it reads VQEEAEELPEFPEGEPDPDLEDPDLALEDDLLDLPEEGEGLDLEEEEEDL. The tract at residues 78–113 is sigma-70 factor domain-1; the sequence is SDPVRQYLHEIGQVPLLTLEEEVELARKVEEGMEAI. The interval 187–257 is sigma-70 factor domain-2; sequence LIEANLRLVV…NRAIADQART (71 aa). The Interaction with polymerase core subunit RpoC motif lies at 211-214; the sequence is DLIQ. Positions 266-344 are sigma-70 factor domain-3; the sequence is ETINKLSRTA…DEHLPSPVDA (79 aa). Residues 357–409 are sigma-70 factor domain-4; sequence ALSKLSEREAMVLKLRKGLIDGREHTLEEVGAFFGVTRERIRQIENKALRKLK. The H-T-H motif DNA-binding region spans 383–402; sequence LEEVGAFFGVTRERIRQIEN.

Belongs to the sigma-70 factor family. RpoD/SigA subfamily. Interacts transiently with the RNA polymerase catalytic core formed by RpoA, RpoB, RpoC and RpoZ (2 alpha, 1 beta, 1 beta' and 1 omega subunit) to form the RNA polymerase holoenzyme that can initiate transcription.

It is found in the cytoplasm. In terms of biological role, sigma factors are initiation factors that promote the attachment of RNA polymerase to specific initiation sites and are then released. This sigma factor is the primary sigma factor during exponential growth. The protein is RNA polymerase sigma factor SigA of Thermus thermophilus (strain ATCC BAA-163 / DSM 7039 / HB27).